Consider the following 265-residue polypeptide: tRNA (guanine-N(7)-)-methyltransferase (265 aa).

E96, E121, D148, and D170 together coordinate S-adenosyl-L-methionine. D170 is a catalytic residue. K174 and D206 together coordinate substrate.

The protein belongs to the class I-like SAM-binding methyltransferase superfamily. TrmB family.

The enzyme catalyses guanosine(46) in tRNA + S-adenosyl-L-methionine = N(7)-methylguanosine(46) in tRNA + S-adenosyl-L-homocysteine. It functions in the pathway tRNA modification; N(7)-methylguanine-tRNA biosynthesis. Its function is as follows. Catalyzes the formation of N(7)-methylguanine at position 46 (m7G46) in tRNA. The sequence is that of tRNA (guanine-N(7)-)-methyltransferase from Rhodopseudomonas palustris (strain ATCC BAA-98 / CGA009).